Consider the following 273-residue polypeptide: Ribosomal RNA small subunit methyltransferase A (273 aa).

Residues Asn-18, Leu-20, Gly-45, Glu-66, Asp-91, and Asn-113 each coordinate S-adenosyl-L-methionine.

The protein belongs to the class I-like SAM-binding methyltransferase superfamily. rRNA adenine N(6)-methyltransferase family. RsmA subfamily.

It localises to the cytoplasm. It carries out the reaction adenosine(1518)/adenosine(1519) in 16S rRNA + 4 S-adenosyl-L-methionine = N(6)-dimethyladenosine(1518)/N(6)-dimethyladenosine(1519) in 16S rRNA + 4 S-adenosyl-L-homocysteine + 4 H(+). Functionally, specifically dimethylates two adjacent adenosines (A1518 and A1519) in the loop of a conserved hairpin near the 3'-end of 16S rRNA in the 30S particle. May play a critical role in biogenesis of 30S subunits. The sequence is that of Ribosomal RNA small subunit methyltransferase A from Escherichia coli (strain SE11).